A 186-amino-acid chain; its full sequence is dCTP deaminase (186 aa).

107–112 is a binding site for dCTP; that stretch reads KSSYAR. The Proton donor/acceptor role is filled by Glu-133. DCTP contacts are provided by Gln-152, Tyr-166, and Gln-176.

The protein belongs to the dCTP deaminase family. Homotrimer.

The enzyme catalyses dCTP + H2O + H(+) = dUTP + NH4(+). It functions in the pathway pyrimidine metabolism; dUMP biosynthesis; dUMP from dCTP (dUTP route): step 1/2. Catalyzes the deamination of dCTP to dUTP. This chain is dCTP deaminase, found in Chloroflexus aggregans (strain MD-66 / DSM 9485).